Consider the following 253-residue polypeptide: Phosphate import ATP-binding protein PstB (253 aa).

An ABC transporter domain is found at 7–249 (ASAKNLNLWY…PQSSKTKRYI (243 aa)). Residue 39–46 (GPSGCGKS) participates in ATP binding.

The protein belongs to the ABC transporter superfamily. Phosphate importer (TC 3.A.1.7) family. The complex is composed of two ATP-binding proteins (PstB), two transmembrane proteins (PstC and PstA) and a solute-binding protein (PstS).

The protein localises to the cell inner membrane. The catalysed reaction is phosphate(out) + ATP + H2O = ADP + 2 phosphate(in) + H(+). In terms of biological role, part of the ABC transporter complex PstSACB involved in phosphate import. Responsible for energy coupling to the transport system. This chain is Phosphate import ATP-binding protein PstB, found in Ehrlichia ruminantium (strain Gardel).